We begin with the raw amino-acid sequence, 501 residues long: ATP synthase subunit alpha, chloroplastic (501 aa).

Residue 170–177 participates in ATP binding; the sequence is GDRQTGKT.

The protein belongs to the ATPase alpha/beta chains family. F-type ATPases have 2 components, CF(1) - the catalytic core - and CF(0) - the membrane proton channel. CF(1) has five subunits: alpha(3), beta(3), gamma(1), delta(1), epsilon(1). CF(0) has four main subunits: a, b, b' and c.

It localises to the plastid. Its subcellular location is the chloroplast thylakoid membrane. It carries out the reaction ATP + H2O + 4 H(+)(in) = ADP + phosphate + 5 H(+)(out). In terms of biological role, produces ATP from ADP in the presence of a proton gradient across the membrane. The alpha chain is a regulatory subunit. This Pisum sativum (Garden pea) protein is ATP synthase subunit alpha, chloroplastic.